Reading from the N-terminus, the 550-residue chain is Formate--tetrahydrofolate ligase (550 aa).

60–67 (TPFGEGKT) lines the ATP pocket.

This sequence belongs to the formate--tetrahydrofolate ligase family.

It carries out the reaction (6S)-5,6,7,8-tetrahydrofolate + formate + ATP = (6R)-10-formyltetrahydrofolate + ADP + phosphate. It participates in one-carbon metabolism; tetrahydrofolate interconversion. This Campylobacter curvus (strain 525.92) protein is Formate--tetrahydrofolate ligase.